The sequence spans 506 residues: Histidine ammonia-lyase (506 aa).

Positions Ala142 to Gly144 form a cross-link, 5-imidazolinone (Ala-Gly). Ser143 bears the 2,3-didehydroalanine (Ser) mark.

It belongs to the PAL/histidase family. Post-translationally, contains an active site 4-methylidene-imidazol-5-one (MIO), which is formed autocatalytically by cyclization and dehydration of residues Ala-Ser-Gly.

The protein localises to the cytoplasm. The catalysed reaction is L-histidine = trans-urocanate + NH4(+). It participates in amino-acid degradation; L-histidine degradation into L-glutamate; N-formimidoyl-L-glutamate from L-histidine: step 1/3. The chain is Histidine ammonia-lyase from Bacillus cereus (strain B4264).